Here is a 143-residue protein sequence, read N- to C-terminus: Cofilin/actin-depolymerizing factor homolog 2 (143 aa).

The 138-residue stretch at 4 to 141 (GVKVSDECVY…FEDELRTIIL (138 aa)) folds into the ADF-H domain.

It belongs to the actin-binding proteins ADF family. Interacts with monomeric actin, does not bind to actin polymers.

It is found in the cytoplasm. Its subcellular location is the cytoskeleton. In terms of biological role, not involved in actin polymerisation, instead functions to stimulate nucleotide exchange on monomeric actin and influence turnover of the small amount of cytosolic actin microfilaments. Essential for erythrocytic schizogony. The polypeptide is Cofilin/actin-depolymerizing factor homolog 2 (Plasmodium falciparum (isolate 3D7)).